The primary structure comprises 260 residues: Shikimate dehydrogenase (260 aa).

Lys-71 acts as the Proton acceptor in catalysis. Position 124 to 128 (124 to 128 (GAGGA)) interacts with NADP(+).

Belongs to the shikimate dehydrogenase family.

The enzyme catalyses shikimate + NADP(+) = 3-dehydroshikimate + NADPH + H(+). It functions in the pathway metabolic intermediate biosynthesis; chorismate biosynthesis; chorismate from D-erythrose 4-phosphate and phosphoenolpyruvate: step 4/7. The protein is Shikimate dehydrogenase (aroE) of Sulfurisphaera tokodaii (strain DSM 16993 / JCM 10545 / NBRC 100140 / 7) (Sulfolobus tokodaii).